Reading from the N-terminus, the 108-residue chain is Peptidyl-prolyl cis-trans isomerase FKBP1A (108 aa).

Residue serine 10 is modified to Phosphoserine. The PPIase FKBP-type domain occupies 20 to 108 (GQTCVVHYTG…VFDVELLKLE (89 aa)). Position 53 is an N6-acetyllysine; alternate (lysine 53). Lysine 53 carries the post-translational modification N6-succinyllysine; alternate.

The protein belongs to the FKBP-type PPIase family. FKBP1 subfamily. Interacts with TGFBR1; prevents TGFBR1 phosphorylation by TGFBR2 and stabilizes it in the inactive conformation. Interacts with ACVR1B and SMAD7. Identified in a complex composed of RYR1, PDE4D, PKA, FKBP1A and protein phosphatase 1 (PP1). Interacts directly with RYR2. Interacts directly with RYR3. Interacts directly with RYR1. Interacts with GLMN; rapamycin and FK506 abolish the interaction with GLMN in a dose dependent manner. Ubiquitous.

The protein localises to the cytoplasm. It is found in the cytosol. Its subcellular location is the sarcoplasmic reticulum membrane. The enzyme catalyses [protein]-peptidylproline (omega=180) = [protein]-peptidylproline (omega=0). With respect to regulation, inhibited by both FK506 and rapamycin. Its function is as follows. Keeps in an inactive conformation TGFBR1, the TGF-beta type I serine/threonine kinase receptor, preventing TGF-beta receptor activation in absence of ligand. Recruits SMAD7 to ACVR1B which prevents the association of SMAD2 and SMAD3 with the activin receptor complex, thereby blocking the activin signal. May modulate the RYR1 calcium channel activity. PPIases accelerate the folding of proteins. It catalyzes the cis-trans isomerization of proline imidic peptide bonds in oligopeptides. The polypeptide is Peptidyl-prolyl cis-trans isomerase FKBP1A (Fkbp1a) (Rattus norvegicus (Rat)).